The chain runs to 416 residues: Probable protein phosphatase 2C 49 (416 aa).

Residues 91-411 (RYGVTSVFGR…DNVSVVVVDL (321 aa)) enclose the PPM-type phosphatase domain. Residues D131, G132, and D319 each contribute to the Mn(2+) site. Over residues 343–360 (PPSPPGCSRPKAVLPPPA) the composition is skewed to pro residues. The segment at 343–368 (PPSPPGCSRPKAVLPPPAGASGGGGG) is disordered. Residue D402 coordinates Mn(2+).

This sequence belongs to the PP2C family. Requires Mg(2+) as cofactor. Mn(2+) is required as a cofactor.

The catalysed reaction is O-phospho-L-seryl-[protein] + H2O = L-seryl-[protein] + phosphate. It catalyses the reaction O-phospho-L-threonyl-[protein] + H2O = L-threonyl-[protein] + phosphate. The chain is Probable protein phosphatase 2C 49 from Oryza sativa subsp. japonica (Rice).